The sequence spans 408 residues: Na(+)/H(+) antiporter NhaA (408 aa).

Helical transmembrane passes span Leu-42 to Phe-62, Val-69 to Leu-89, Ala-110 to Val-130, Gly-140 to Gly-160, Ile-169 to Phe-189, Ala-192 to Leu-212, Phe-215 to Leu-235, Gly-238 to Thr-258, Val-277 to Leu-297, Leu-312 to Leu-332, Leu-346 to Leu-366, and Ile-380 to Thr-400.

The protein belongs to the NhaA Na(+)/H(+) (TC 2.A.33) antiporter family.

It localises to the cell inner membrane. It catalyses the reaction Na(+)(in) + 2 H(+)(out) = Na(+)(out) + 2 H(+)(in). Functionally, na(+)/H(+) antiporter that extrudes sodium in exchange for external protons. This Nitrobacter hamburgensis (strain DSM 10229 / NCIMB 13809 / X14) protein is Na(+)/H(+) antiporter NhaA.